We begin with the raw amino-acid sequence, 124 residues long: Large ribosomal subunit protein bL12 (124 aa).

Belongs to the bacterial ribosomal protein bL12 family. As to quaternary structure, homodimer. Part of the ribosomal stalk of the 50S ribosomal subunit. Forms a multimeric L10(L12)X complex, where L10 forms an elongated spine to which 2 to 4 L12 dimers bind in a sequential fashion. Binds GTP-bound translation factors.

Functionally, forms part of the ribosomal stalk which helps the ribosome interact with GTP-bound translation factors. Is thus essential for accurate translation. The protein is Large ribosomal subunit protein bL12 of Ralstonia nicotianae (strain ATCC BAA-1114 / GMI1000) (Ralstonia solanacearum).